The chain runs to 309 residues: Ribonuclease Z (309 aa).

Zn(2+) is bound by residues His-63, His-65, Asp-67, His-68, His-141, Asp-212, and His-270. Asp-67 serves as the catalytic Proton acceptor.

Belongs to the RNase Z family. In terms of assembly, homodimer. Zn(2+) serves as cofactor.

It carries out the reaction Endonucleolytic cleavage of RNA, removing extra 3' nucleotides from tRNA precursor, generating 3' termini of tRNAs. A 3'-hydroxy group is left at the tRNA terminus and a 5'-phosphoryl group is left at the trailer molecule.. Its function is as follows. Zinc phosphodiesterase, which displays some tRNA 3'-processing endonuclease activity. Probably involved in tRNA maturation, by removing a 3'-trailer from precursor tRNA. In Halalkalibacterium halodurans (strain ATCC BAA-125 / DSM 18197 / FERM 7344 / JCM 9153 / C-125) (Bacillus halodurans), this protein is Ribonuclease Z.